Reading from the N-terminus, the 62-residue chain is Sperm protamine P1 (62 aa).

Residues M1–Y62 form a disordered region.

Belongs to the protamine P1 family. In terms of tissue distribution, testis.

It is found in the nucleus. The protein localises to the chromosome. Functionally, protamines substitute for histones in the chromatin of sperm during the haploid phase of spermatogenesis. They compact sperm DNA into a highly condensed, stable and inactive complex. The polypeptide is Sperm protamine P1 (PRM1) (Notamacropus eugenii (Tammar wallaby)).